The chain runs to 657 residues: Replication restart protein PriA (657 aa).

The Helicase ATP-binding domain occupies 143–309 (ITASTGARSF…LRGAVRRLPL (167 aa)). An ATP-binding site is contributed by 156–163 (GVTGSGKT). Residues 252–255 (DEEH) carry the DEAH box motif. Zn(2+)-binding residues include C366, C369, C375, C378, C393, C396, C406, and C409. Residues 390 to 570 (AMQCHYCGRQ…PFVRLIRFVF (181 aa)) enclose the Helicase C-terminal domain.

It belongs to the helicase family. PriA subfamily. Component of the replication restart primosome. The cofactor is Zn(2+).

The catalysed reaction is Couples ATP hydrolysis with the unwinding of duplex DNA by translocating in the 3'-5' direction.. The enzyme catalyses ATP + H2O = ADP + phosphate + H(+). Initiates the restart of stalled replication forks, which reloads the replicative helicase on sites other than the origin of replication. Recognizes and binds to abandoned replication forks and remodels them to uncover a helicase loading site. Promotes assembly of the primosome at these replication forks. This is Replication restart protein PriA from Treponema pallidum (strain Nichols).